Consider the following 339-residue polypeptide: Protein-arginine kinase (339 aa).

The Phosphagen kinase C-terminal domain maps to isoleucine 14–phenylalanine 242. Residues asparagine 17–serine 21, arginine 164–asparagine 168, and lysine 195–glutamate 200 contribute to the ATP site.

The protein belongs to the ATP:guanido phosphotransferase family.

It carries out the reaction L-arginyl-[protein] + ATP = N(omega)-phospho-L-arginyl-[protein] + ADP + H(+). Its function is as follows. Catalyzes the specific phosphorylation of arginine residues in proteins. In Clostridium botulinum (strain Eklund 17B / Type B), this protein is Protein-arginine kinase.